The primary structure comprises 593 residues: MDRMTEDALRLNLLKRSLDPADERDDVLAKRLKMEGHEAMERLKMLALLKRKDLANLEVPHELPTKQDGSGVKGYEEKLNGNLRPHGDNRTAGRPGKENINDEPVDMSARRSEPERGRLTPSPDIIVLSDNEASSPRSSSRMEERLKAANLEMFKGKGIEERQQLIKQLRDELRLEEARLVLLKKLRQSQLQKENVVQKTPVVQNAASIVQPSPAHVGQQGLSKLPSRPGAQGVEPQNLRTLQGHSVIRSATNTTLPHMLMSQRVIAPNPAQLQGQRGPPKPGLVRTTTPNMNPAINYQPQSSSSVPCQRTTSSAIYMNLASHIQPGTVNRVSSPLPSPSAMTDAANSQAAAKLALRKQLEKTLLEIPPPKPPAPLLHFLPSAANSEFIYMVGLEEVVQSVIDSQGKSCASLLRVEPFVCAQCRTDFTPHWKQEKNGKILCEQCMTSNQKKALKAEHTNRLKNAFVKALQQEQEIEQRLQQQAALSPTTAPAVSSVSKQETIMRHHTLRQAPQPQSSLQRGIPTSARSMLSNFAQAPQLSVPGGLLGMPGVNIAYLNTGIGGHKGPSLADRQREYLLDMIPPRSISQSISGQK.

Serine 17 is modified (phosphoserine). Glycyl lysine isopeptide (Lys-Gly) (interchain with G-Cter in SUMO2) cross-links involve residues lysine 33, lysine 66, and lysine 97. A disordered region spans residues 62-123; the sequence is ELPTKQDGSG…PERGRLTPSP (62 aa). 2 stretches are compositionally biased toward basic and acidic residues: residues 74 to 100 and 108 to 118; these read GYEEKLNGNLRPHGDNRTAGRPGKENI and SARRSEPERGR. Phosphothreonine is present on threonine 120. Phosphoserine occurs at positions 122, 129, 134, and 135. Residues 140–194 are a coiled coil; it reads SRMEERLKAANLEMFKGKGIEERQQLIKQLRDELRLEEARLVLLKKLRQSQLQKE. Lysine 147 is covalently cross-linked (Glycyl lysine isopeptide (Lys-Gly) (interchain with G-Cter in SUMO2)). Positions 165–195 are CR1; interaction with MBD2 and MBD3; sequence LIKQLRDELRLEEARLVLLKKLRQSQLQKEN. Lysine 199 participates in a covalent cross-link: Glycyl lysine isopeptide (Lys-Gly) (interchain with G-Cter in SUMO2). Serine 208 carries the post-translational modification Phosphoserine. The disordered stretch occupies residues 213–235; sequence SPAHVGQQGLSKLPSRPGAQGVE. Lysine 281 participates in a covalent cross-link: Glycyl lysine isopeptide (Lys-Gly) (interchain with G-Cter in SUMO2). Serine 333, serine 338, and serine 340 each carry phosphoserine. The CR2; histone tail-binding stretch occupies residues 340-480; it reads SAMTDAANSQ…QEQEIEQRLQ (141 aa). Residues lysine 353, lysine 454, and lysine 467 each participate in a glycyl lysine isopeptide (Lys-Gly) (interchain with G-Cter in SUMO2) cross-link. The segment at 414–467 adopts a GATA-type zinc-finger fold; sequence RVEPFVCAQCRTDFTPHWKQEKNGKILCEQCMTSNQKKALKAEHTNRLKNAFVK. Residues 449–482 are a coiled coil; sequence QKKALKAEHTNRLKNAFVKALQQEQEIEQRLQQQ. Serine 486 carries the post-translational modification Phosphoserine. A Glycyl lysine isopeptide (Lys-Gly) (interchain with G-Cter in SUMO2) cross-link involves residue lysine 498.

As to quaternary structure, homooligomer. Component of the nucleosome remodeling and deacetylase (NuRD) repressor complex, composed of core proteins MTA1, MTA2, MTA3, RBBP4, RBBP7, HDAC1, HDAC2, MBD2, MBD3, and peripherally associated proteins CDK2AP1, CDK2AP2, GATAD2A, GATAD2B, CHD3, CHD4 and CHD5. The exact stoichiometry of the NuRD complex is unknown, and some subunits such as MBD2 and MBD3, GATAD2A and GATAD2B, and CHD3, CHD4 and CHD5 define mutually exclusive NuRD complexes. Interacts with MBD2; this is required for the enhancement of MBD2-mediated repression and for targeting to the chromatin. Interacts with MBD3. Component of the MeCP1 histone deacetylase complex. Interacts with histone tails, including that of histones H2A, H2B, H3 and H4. Interacts with ERCC6. Widely expressed.

The protein localises to the nucleus speckle. Its subcellular location is the nucleus. It localises to the chromosome. Transcriptional repressor. Acts as a component of the histone deacetylase NuRD complex which participates in the remodeling of chromatin. Enhances MBD2-mediated repression. Efficient repression requires the presence of GATAD2A. Targets MBD3 to discrete loci in the nucleus. May play a role in synapse development. This is Transcriptional repressor p66-beta (GATAD2B) from Homo sapiens (Human).